The primary structure comprises 224 residues: PKHD-type hydroxylase Shewmr4_3244 (224 aa).

A Fe2OG dioxygenase domain is found at 78–176 (QFYPPLFNRY…RTAAFMWLQS (99 aa)). 3 residues coordinate Fe cation: His-96, Asp-98, and His-157. Arg-167 serves as a coordination point for 2-oxoglutarate.

Fe(2+) is required as a cofactor. It depends on L-ascorbate as a cofactor.

The polypeptide is PKHD-type hydroxylase Shewmr4_3244 (Shewanella sp. (strain MR-4)).